A 164-amino-acid polypeptide reads, in one-letter code: UPF0201 protein MA_4659 (164 aa).

This sequence belongs to the UPF0201 family.

This is UPF0201 protein MA_4659 from Methanosarcina acetivorans (strain ATCC 35395 / DSM 2834 / JCM 12185 / C2A).